The following is a 391-amino-acid chain: Lysophosphatidylinositol acyltransferase 10 (391 aa).

The next 5 helical transmembrane spans lie at 10 to 30, 52 to 72, 97 to 119, 323 to 343, and 347 to 367; these read LLGW…NYII, AISY…GVRI, WMYM…KISL, LTSL…IFFV, and QLGF…YGGI.

Belongs to the 1-acyl-sn-glycerol-3-phosphate acyltransferase family. As to expression, expressed in seam cells, vulval epithelial cells and the major epithelial syncytium hyp7, and in several head neurons including AIY interneurons.

The protein resides in the endoplasmic reticulum membrane. The enzyme catalyses a 2-acyl-sn-glycero-3-phospho-D-myo-inositol + an acyl-CoA = a 1,2-diacyl-sn-glycero-3-phospho-(1D-myo-inositol) + CoA. The catalysed reaction is a 2-acyl-sn-glycero-3-phospho-D-myo-inositol + octadecanoyl-CoA = 1-octadecanoyl-2-acyl-sn-glycero-3-phospho-1D-myo-inositol + CoA. It functions in the pathway phospholipid metabolism; phosphatidylinositol metabolism. In terms of biological role, acyltransferase required for the fatty acid remodeling of phosphatidylinositol (1,2-diacyl-sn-glycero-3-phosphoinositol or PI). Mediates the conversion of lysophosphatidylinositol (2-acylglycerophosphatidylinositol or LPI) into PI (LPIAT activity). Has preference for saturated and mono-unsaturated fatty acids as acyl donors and sn-2-acyl lysoPI (2-acyl-sn-glycero-3-phospho-D-myo-inositol) as acyl acceptor. Contributes to the asymmetric cell division of epithelial cells. Asymmetric cell division is the fundamental mechanism by which multicellular organisms generate cell diversity. The polypeptide is Lysophosphatidylinositol acyltransferase 10 (Caenorhabditis elegans).